The primary structure comprises 251 residues: Seminal metalloprotease 1 (251 aa).

The signal sequence occupies residues 1–18 (MFPQIWGVIFLFTPTVFS). The Peptidase M12A domain maps to 44–248 (NGIVNQIYHW…RKLNKMYRCP (205 aa)). N-linked (GlcNAc...) asparagine glycosylation is found at Asn55 and Asn120. Intrachain disulfides connect Cys87-Cys247 and Cys111-Cys136. Position 144 (His144) interacts with Zn(2+). Glu145 is an active-site residue. 2 residues coordinate Zn(2+): His148 and His154. Asn185 carries an N-linked (GlcNAc...) asparagine glycan.

It depends on Zn(2+) as a cofactor. In terms of processing, undergoes cleavage in the male during mating with a cleaved product detected in the ejaculatory duct and/or bulb of males by 8-10 minutes after the start of mating. Further cleavage occurs in the mated female. May undergo cleavage in a two-step process where it is first cleaved by Sems, making it susceptible to activational cleavage which may be carried out by another protease or by autocleavage. As to expression, produced in the male accessory glands and secreted into seminal fluid. In mated females, confined to the reproductive tract and also detected in eggs laid by mated females (at protein level).

The protein localises to the secreted. In terms of biological role, seminal fluid metalloprotease which is transferred to females during mating and is required for processing of two other seminal fluid proteins Acp26Aa and Acp36DE in mated females. In Drosophila melanogaster (Fruit fly), this protein is Seminal metalloprotease 1.